The chain runs to 532 residues: MALTRFERFLGRLLRAVVWILFAAFKLFAPQQRHGVSRLPPITNPLLLLSAMQLARKIRRKEVTSVEVVQAYIDRIQEVNPLINAMVKDRFSAALQEAAQVDKLIEEETGGEDVLEDRLPLLGVPITVKEAFALQGMPNSTGLLTRRDLVSGADAPSVALLKRAGAIPLGVTNCSELCMWLESHNHLYGITNNPYDFERIVGGSSGGEGSILGAGSSVIGIGSDIGGSIRIPCFFNGIFGHKPSVGIVNNEGQYPPASGQQMGFLCTGPMCRYAEDLIPMLSIMGGPNAEKLSLFTEVDLKKLRFFSVPHNGGSHLVSPVEPQLLHAQKMVVKRLEADLGVKVQELLIPQLKYSFQIWGTMMASPGKDGKPPTTFAELMSEGGKKVWPAWELFKWFLGFSSHTLAAIGLALVELFQSSHPSPFIMQQKESLQQELEELLGTDGVLLYPSHPLIAQKHHHPIFTPFNFSYTGIFNILGLPVTQCPLGLSAEGLPLGVQIVAGKLQDRLSLATALYLEKAFGGWREPGKTTIKP.

Residues 9–29 traverse the membrane as a helical segment; it reads FLGRLLRAVVWILFAAFKLFA. Catalysis depends on charge relay system residues Lys129 and Ser204. Ser228 acts as the Acyl-ester intermediate in catalysis.

It belongs to the amidase family.

Its subcellular location is the membrane. The enzyme catalyses N-(5Z,8Z,11Z,14Z-eicosatetraenoyl)-ethanolamine + H2O = ethanolamine + (5Z,8Z,11Z,14Z)-eicosatetraenoate. It catalyses the reaction (9Z)-octadecenamide + H2O = (9Z)-octadecenoate + NH4(+). In Danio rerio (Zebrafish), this protein is Fatty-acid amide hydrolase 2-A (faah2a).